A 327-amino-acid chain; its full sequence is Ferredoxin--NADP reductase (327 aa).

Positions 18, 37, 45, 50, 90, 124, 283, and 324 each coordinate FAD.

It belongs to the ferredoxin--NADP reductase type 2 family. In terms of assembly, homodimer. FAD is required as a cofactor.

It carries out the reaction 2 reduced [2Fe-2S]-[ferredoxin] + NADP(+) + H(+) = 2 oxidized [2Fe-2S]-[ferredoxin] + NADPH. This Saccharopolyspora erythraea (strain ATCC 11635 / DSM 40517 / JCM 4748 / NBRC 13426 / NCIMB 8594 / NRRL 2338) protein is Ferredoxin--NADP reductase.